Consider the following 329-residue polypeptide: Biotin synthase (329 aa).

The 231-residue stretch at Phe48 to Arg278 folds into the Radical SAM core domain. [4Fe-4S] cluster-binding residues include Cys66, Cys70, and Cys73. Ser143 and Cys203 together coordinate [2Fe-2S] cluster.

It belongs to the radical SAM superfamily. Biotin synthase family. In terms of assembly, homodimer. [4Fe-4S] cluster is required as a cofactor. Requires [2Fe-2S] cluster as cofactor.

It carries out the reaction (4R,5S)-dethiobiotin + (sulfur carrier)-SH + 2 reduced [2Fe-2S]-[ferredoxin] + 2 S-adenosyl-L-methionine = (sulfur carrier)-H + biotin + 2 5'-deoxyadenosine + 2 L-methionine + 2 oxidized [2Fe-2S]-[ferredoxin]. Its pathway is cofactor biosynthesis; biotin biosynthesis; biotin from 7,8-diaminononanoate: step 2/2. Catalyzes the conversion of dethiobiotin (DTB) to biotin by the insertion of a sulfur atom into dethiobiotin via a radical-based mechanism. The protein is Biotin synthase of Geotalea daltonii (strain DSM 22248 / JCM 15807 / FRC-32) (Geobacter daltonii).